The primary structure comprises 254 residues: NAD-dependent protein deacetylase 1 (254 aa).

In terms of domain architecture, Deacetylase sirtuin-type spans 5 to 254 (ASDLRSGVER…GETLGPFVGN (250 aa)). Alanine 31, threonine 35, phenylalanine 42, arginine 43, glutamine 108, isoleucine 110, aspartate 111, and histidine 128 together coordinate NAD(+). Phenylalanine 42 is a nicotinamide binding site. Residues isoleucine 110 and aspartate 111 each coordinate nicotinamide. Histidine 128 functions as the Proton acceptor in the catalytic mechanism. Residues cysteine 136, cysteine 139, cysteine 160, and cysteine 163 each coordinate Zn(2+). NAD(+) is bound by residues serine 201, serine 202, asparagine 226, aspartate 243, and isoleucine 244.

This sequence belongs to the sirtuin family. Class U subfamily. It depends on Zn(2+) as a cofactor.

The protein localises to the cytoplasm. The enzyme catalyses N(6)-acetyl-L-lysyl-[protein] + NAD(+) + H2O = 2''-O-acetyl-ADP-D-ribose + nicotinamide + L-lysyl-[protein]. Functionally, NAD-dependent protein deacetylase which modulates the activities of several enzymes which are inactive in their acetylated form. This chain is NAD-dependent protein deacetylase 1, found in Bradyrhizobium diazoefficiens (strain JCM 10833 / BCRC 13528 / IAM 13628 / NBRC 14792 / USDA 110).